The primary structure comprises 349 residues: Isopentenyl-diphosphate delta-isomerase (349 aa).

A substrate-binding site is contributed by 6-7; sequence RK. Residues 62–64, Ser-93, and Asn-122 contribute to the FMN site; that span reads AMT. Gln-152 lines the substrate pocket. Glu-153 lines the Mg(2+) pocket. FMN-binding positions include Lys-184, Thr-214, 258-259, and 280-281; these read GG and AG.

This sequence belongs to the IPP isomerase type 2 family. As to quaternary structure, homooctamer. Dimer of tetramers. Requires FMN as cofactor. NADPH serves as cofactor. It depends on Mg(2+) as a cofactor.

Its subcellular location is the cytoplasm. The catalysed reaction is isopentenyl diphosphate = dimethylallyl diphosphate. Functionally, involved in the biosynthesis of isoprenoids. Catalyzes the 1,3-allylic rearrangement of the homoallylic substrate isopentenyl (IPP) to its allylic isomer, dimethylallyl diphosphate (DMAPP). This is Isopentenyl-diphosphate delta-isomerase from Bacillus thuringiensis subsp. konkukian (strain 97-27).